Consider the following 766-residue polypeptide: Dolichyl pyrophosphate Glc1Man9GlcNAc2 alpha-1,3-glucosyltransferase (766 aa).

The next 12 helical transmembrane spans lie at 6–26 (LVLAVTAILISFKCLLIPAYV), 60–80 (YPPFFAYFELGLASVAHFFGF), 96–116 (ILIFQRFSVIFCDILYIAVCA), 156–176 (SIHFQYNSMLTAIFLMSLFFI), 190–210 (ILLNFKHIYVYYALGYVFYYL), 228–248 (AISLAIALLIPFCASIFPFIH), 324–344 (PMGTLCLVVISSMIVLTGLVI), 350–370 (ADFSLFAVFSAFCFFYFGYHV), 395–415 (ILIHLTCIASFSLFPLLFTPF), 423–443 (ICVSYFFIQLVFLKRVTLMPL), 452–472 (VASWLLMGMVEVYNTFLHKWL), and 482–502 (LMAISILTAIELTGLIGALIW).

It belongs to the ALG6/ALG8 glucosyltransferase family.

It is found in the endoplasmic reticulum membrane. It carries out the reaction an alpha-D-Glc-(1-&gt;3)-alpha-D-Man-(1-&gt;2)-alpha-D-Man-(1-&gt;2)-alpha-D-Man-(1-&gt;3)-[alpha-D-Man-(1-&gt;2)-alpha-D-Man-(1-&gt;3)-[alpha-D-Man-(1-&gt;2)-alpha-D-Man-(1-&gt;6)]-alpha-D-Man-(1-&gt;6)]-beta-D-Man-(1-&gt;4)-beta-D-GlcNAc-(1-&gt;4)-alpha-D-GlcNAc-diphospho-di-trans,poly-cis-dolichol + a di-trans,poly-cis-dolichyl beta-D-glucosyl phosphate = an alpha-D-Glc-(1-&gt;3)-alpha-D-Glc-(1-&gt;3)-alpha-D-Man-(1-&gt;2)-alpha-D-Man-(1-&gt;2)-alpha-D-Man-(1-&gt;3)-[alpha-D-Man-(1-&gt;2)-alpha-D-Man-(1-&gt;3)-[alpha-D-Man-(1-&gt;2)-alpha-D-Man-(1-&gt;6)]-alpha-D-Man-(1-&gt;6)]-beta-D-Man-(1-&gt;4)-beta-D-GlcNAc-(1-&gt;4)-alpha-D-GlcNAc-diphospho-di-trans,poly-cis-dolichol + a di-trans,poly-cis-dolichyl phosphate + H(+). It participates in protein modification; protein glycosylation. In terms of biological role, dolichyl pyrophosphate Glc1Man9GlcNAc2 alpha-1,3-glucosyltransferase that operates in the biosynthetic pathway of dolichol-linked oligosaccharides, the glycan precursors employed in protein asparagine (N)-glycosylation. The assembly of dolichol-linked oligosaccharides begins on the cytosolic side of the endoplasmic reticulum membrane and finishes in its lumen. The sequential addition of sugars to dolichol pyrophosphate produces dolichol-linked oligosaccharides containing fourteen sugars, including two GlcNAcs, nine mannoses and three glucoses. Once assembled, the oligosaccharide is transferred from the lipid to nascent proteins by oligosaccharyltransferases. In the lumen of the endoplasmic reticulum, adds the second glucose residue from dolichyl phosphate glucose (Dol-P-Glc) onto the lipid-linked oligosaccharide intermediate Glc(1)Man(9)GlcNAc(2)-PP-Dol to produce Glc(2)Man(9)GlcNAc(2)-PP-Dol. The chain is Dolichyl pyrophosphate Glc1Man9GlcNAc2 alpha-1,3-glucosyltransferase from Caenorhabditis elegans.